The primary structure comprises 122 residues: Large ribosomal subunit protein uL14 (122 aa).

The protein belongs to the universal ribosomal protein uL14 family. Part of the 50S ribosomal subunit. Forms a cluster with proteins L3 and L19. In the 70S ribosome, L14 and L19 interact and together make contacts with the 16S rRNA in bridges B5 and B8.

In terms of biological role, binds to 23S rRNA. Forms part of two intersubunit bridges in the 70S ribosome. In Bartonella quintana (strain Toulouse) (Rochalimaea quintana), this protein is Large ribosomal subunit protein uL14.